Here is a 171-residue protein sequence, read N- to C-terminus: Small ribosomal subunit protein uS13 (171 aa).

Polar residues predominate over residues Met-1–Val-11. Disordered stretches follow at residues Met-1–Glu-24 and Glu-144–Ile-164. A compositionally biased stretch (basic residues) spans Glu-144 to Gly-158.

Belongs to the universal ribosomal protein uS13 family. Part of the 30S ribosomal subunit. Forms a loose heterodimer with protein S19. Forms two bridges to the 50S subunit in the 70S ribosome.

Functionally, located at the top of the head of the 30S subunit, it contacts several helices of the 16S rRNA. In the 70S ribosome it contacts the 23S rRNA (bridge B1a) and protein L5 of the 50S subunit (bridge B1b), connecting the 2 subunits; these bridges are implicated in subunit movement. In Thermoplasma acidophilum (strain ATCC 25905 / DSM 1728 / JCM 9062 / NBRC 15155 / AMRC-C165), this protein is Small ribosomal subunit protein uS13.